We begin with the raw amino-acid sequence, 245 residues long: 1-(5-phosphoribosyl)-5-[(5-phosphoribosylamino)methylideneamino] imidazole-4-carboxamide isomerase (245 aa).

Residue Asp-8 is the Proton acceptor of the active site. Catalysis depends on Asp-130, which acts as the Proton donor.

Belongs to the HisA/HisF family.

Its subcellular location is the cytoplasm. It carries out the reaction 1-(5-phospho-beta-D-ribosyl)-5-[(5-phospho-beta-D-ribosylamino)methylideneamino]imidazole-4-carboxamide = 5-[(5-phospho-1-deoxy-D-ribulos-1-ylimino)methylamino]-1-(5-phospho-beta-D-ribosyl)imidazole-4-carboxamide. It participates in amino-acid biosynthesis; L-histidine biosynthesis; L-histidine from 5-phospho-alpha-D-ribose 1-diphosphate: step 4/9. In Pseudomonas putida (strain ATCC 47054 / DSM 6125 / CFBP 8728 / NCIMB 11950 / KT2440), this protein is 1-(5-phosphoribosyl)-5-[(5-phosphoribosylamino)methylideneamino] imidazole-4-carboxamide isomerase.